A 108-amino-acid polypeptide reads, in one-letter code: DNA-binding protein HBbu (108 aa).

Belongs to the bacterial histone-like protein family.

Its function is as follows. Histone-like DNA-binding protein which is capable of wrapping DNA to stabilize it, and thus to prevent its denaturation under extreme environmental conditions. The chain is DNA-binding protein HBbu (hbb) from Borreliella japonica (Borrelia japonica).